The chain runs to 148 residues: Lysozyme C (148 aa).

A signal peptide spans 1-18 (MRALIILGLVLLSVTVQG). The C-type lysozyme domain maps to 19–148 (KIFERCELAR…VSQYVKGCGV (130 aa)). 4 cysteine pairs are disulfide-bonded: C24–C146, C48–C134, C83–C99, and C95–C113. Active-site residues include E53 and D71.

The protein belongs to the glycosyl hydrolase 22 family. Monomer.

The protein resides in the secreted. The catalysed reaction is Hydrolysis of (1-&gt;4)-beta-linkages between N-acetylmuramic acid and N-acetyl-D-glucosamine residues in a peptidoglycan and between N-acetyl-D-glucosamine residues in chitodextrins.. Its function is as follows. Lysozymes have primarily a bacteriolytic function; those in tissues and body fluids are associated with the monocyte-macrophage system and enhance the activity of immunoagents. Also plays a role in digestion in this species. The polypeptide is Lysozyme C (LYZ) (Trachypithecus francoisi (Francois' leaf monkey)).